The sequence spans 464 residues: Cysteine--tRNA ligase (464 aa).

Cys-32 serves as a coordination point for Zn(2+). The short motif at 34–44 (VTVYDDCHIGH) is the 'HIGH' region element. The Zn(2+) site is built by Cys-213, His-238, and Glu-242. A 'KMSKS' region motif is present at residues 270-274 (KMSKS). Lys-273 provides a ligand contact to ATP.

Belongs to the class-I aminoacyl-tRNA synthetase family. As to quaternary structure, monomer. Zn(2+) is required as a cofactor.

Its subcellular location is the cytoplasm. The enzyme catalyses tRNA(Cys) + L-cysteine + ATP = L-cysteinyl-tRNA(Cys) + AMP + diphosphate. The polypeptide is Cysteine--tRNA ligase (Francisella tularensis subsp. tularensis (strain SCHU S4 / Schu 4)).